A 657-amino-acid chain; its full sequence is Zinc finger protein 630 (657 aa).

In terms of domain architecture, KRAB spans valine 8–proline 79. 2 C2H2-type zinc fingers span residues asparagine 263–histidine 285 and tyrosine 291–histidine 313. The C2H2-type 3; degenerate zinc-finger motif lies at tyrosine 319–histidine 341. C2H2-type zinc fingers lie at residues tyrosine 347–histidine 369, phenylalanine 375–histidine 397, tyrosine 403–histidine 425, tyrosine 431–histidine 453, tyrosine 459–histidine 481, tyrosine 487–histidine 509, tyrosine 515–histidine 537, tyrosine 543–histidine 565, and tyrosine 571–histidine 593. The C2H2-type 13; degenerate zinc-finger motif lies at proline 599–histidine 621. A C2H2-type 14; degenerate zinc finger spans residues serine 627 to tyrosine 649.

This sequence belongs to the krueppel C2H2-type zinc-finger protein family.

It localises to the nucleus. Functionally, may be involved in transcriptional regulation. The sequence is that of Zinc finger protein 630 (ZNF630) from Homo sapiens (Human).